A 153-amino-acid chain; its full sequence is Calmodulin-like protein 3 (153 aa).

EF-hand domains lie at 1-36, 37-72, 74-109, and 112-147; these read MDQA…LGIY, IPDK…IMEE, DEEE…LGLK, and RTLE…GGFA. 19 residues coordinate Ca(2+): Asp14, Asn16, Asp18, Lys20, Glu25, Asp50, Asn52, Asp54, Tyr56, Glu61, Asp87, Asn89, Asp91, Glu98, Asp125, Asp127, Asp129, Met131, and Glu136.

Belongs to the calmodulin family.

Potential calcium sensor. This Arabidopsis thaliana (Mouse-ear cress) protein is Calmodulin-like protein 3 (CML3).